Reading from the N-terminus, the 371-residue chain is Palmitoyl-monogalactosyldiacylglycerol delta-7 desaturase, chloroplastic (371 aa).

A chloroplast-targeting transit peptide spans 1-67 (MASLLTKPKP…KGLKRDVTTA (67 aa)). The next 2 helical transmembrane spans lie at 103–123 (FGAV…PFQF) and 127–147 (AVSV…TLSF). The short motif at 148-153 (HRNLSH) is the Histidine box-1 element. A Histidine box-2 motif is present at residues 185–189 (HRYHH). A helical transmembrane segment spans residues 251-271 (ALAVALYAMGGFPFIVWGMGV). Residues 317-321 (HNNHH) carry the Histidine box-3 motif.

It belongs to the fatty acid desaturase type 1 family. The cofactor is Fe(2+). In terms of tissue distribution, highly expressed in young leaves. Low expression in roots.

It localises to the plastid. The protein localises to the chloroplast membrane. It catalyses the reaction a 1-acyl-2-hexadecanoyl-glycerolipid + 2 reduced [2Fe-2S]-[ferredoxin] + O2 + 2 H(+) = a 1-acyl-2-[(7Z)-hexadecenoyl]-glycerolipid + 2 oxidized [2Fe-2S]-[ferredoxin] + 2 H2O. It functions in the pathway lipid metabolism; oxylipin biosynthesis. Its pathway is lipid metabolism; polyunsaturated fatty acid biosynthesis. In terms of biological role, fatty acid desaturase involved in the first desaturation step leading to the formation of hexadeca 7,10,13-trienoic acid (16:3(7Z,10Z,13Z)), the major functional components of thylakoid membranes. Required for chloroplast biogenesis at low temperature. Also indirectly involved in the production of the oxylipin dinor-oxo-phyto-dienoic acid implicated in wound signaling. The protein is Palmitoyl-monogalactosyldiacylglycerol delta-7 desaturase, chloroplastic of Arabidopsis thaliana (Mouse-ear cress).